A 613-amino-acid chain; its full sequence is tRNA 5-methylaminomethyl-2-thiouridine biosynthesis bifunctional protein MnmC (613 aa).

The tRNA (mnm(5)s(2)U34)-methyltransferase stretch occupies residues Met-1–Glu-225. Residues Ile-252–Leu-613 form an FAD-dependent cmnm(5)s(2)U34 oxidoreductase region.

It in the N-terminal section; belongs to the methyltransferase superfamily. tRNA (mnm(5)s(2)U34)-methyltransferase family. The protein in the C-terminal section; belongs to the DAO family. The cofactor is FAD.

The protein resides in the cytoplasm. It carries out the reaction 5-aminomethyl-2-thiouridine(34) in tRNA + S-adenosyl-L-methionine = 5-methylaminomethyl-2-thiouridine(34) in tRNA + S-adenosyl-L-homocysteine + H(+). Its function is as follows. Catalyzes the last two steps in the biosynthesis of 5-methylaminomethyl-2-thiouridine (mnm(5)s(2)U) at the wobble position (U34) in tRNA. Catalyzes the FAD-dependent demodification of cmnm(5)s(2)U34 to nm(5)s(2)U34, followed by the transfer of a methyl group from S-adenosyl-L-methionine to nm(5)s(2)U34, to form mnm(5)s(2)U34. The protein is tRNA 5-methylaminomethyl-2-thiouridine biosynthesis bifunctional protein MnmC of Campylobacter jejuni (strain RM1221).